Consider the following 90-residue polypeptide: DNA-binding protein HU-beta (90 aa).

It belongs to the bacterial histone-like protein family. In terms of assembly, heterodimer of an alpha and a beta chain.

In terms of biological role, histone-like DNA-binding protein which is capable of wrapping DNA to stabilize it, and thus to prevent its denaturation under extreme environmental conditions. This chain is DNA-binding protein HU-beta (hupB), found in Pseudomonas fluorescens (strain ATCC BAA-477 / NRRL B-23932 / Pf-5).